The following is a 34-amino-acid chain: Cytochrome b6-f complex subunit 7 (34 aa).

The helical transmembrane segment at 9–27 (AILSFGLIFVGWGLGALLL) threads the bilayer.

The protein belongs to the PetM family. As to quaternary structure, the 4 large subunits of the cytochrome b6-f complex are cytochrome b6, subunit IV (17 kDa polypeptide, PetD), cytochrome f and the Rieske protein, while the 4 small subunits are PetG, PetL, PetM and PetN. The complex functions as a dimer.

The protein localises to the cellular thylakoid membrane. Component of the cytochrome b6-f complex, which mediates electron transfer between photosystem II (PSII) and photosystem I (PSI), cyclic electron flow around PSI, and state transitions. In Nostoc punctiforme (strain ATCC 29133 / PCC 73102), this protein is Cytochrome b6-f complex subunit 7.